The following is a 244-amino-acid chain: DNA repair protein RecO (244 aa).

The protein belongs to the RecO family.

Functionally, involved in DNA repair and RecF pathway recombination. The protein is DNA repair protein RecO of Polynucleobacter necessarius subsp. necessarius (strain STIR1).